The sequence spans 187 residues: MPEVERKSKITASRKLMLKSLMLAKAKECWEQEHEEREAEKVRYLSERIPTLQTRGLSLSALQDLCRELHAKVEVVDEERYDIEAKCLHNTREIKDLKLKVLDLRGKFKRPPLRRVRVSADAMLRALLGSKHKVSMDLRANLKSVKKEDTEKERPVEVGDWRKNVEAMSGMEGRKKMFDAAKSPTLQ.

Pro2 is modified (N-acetylproline). The involved in binding TNC stretch occupies residues 2–48; sequence PEVERKSKITASRKLMLKSLMLAKAKECWEQEHEEREAEKVRYLSER. Ser58 is subject to Phosphoserine. The segment at 97 to 118 is involved in binding TNC and actin; it reads LKLKVLDLRGKFKRPPLRRVRV.

It belongs to the troponin I family. Binds to actin and tropomyosin.

Its function is as follows. Troponin I is the inhibitory subunit of troponin, the thin filament regulatory complex which confers calcium-sensitivity to striated muscle actomyosin ATPase activity. The polypeptide is Troponin I, slow skeletal muscle (Tnni1) (Rattus norvegicus (Rat)).